We begin with the raw amino-acid sequence, 322 residues long: Hydrolase C26A3.11 (322 aa).

Residues 44 to 290 (FRIGLVQLAN…PSIVYADIDP (247 aa)) enclose the CN hydrolase domain. Catalysis depends on E83, which acts as the Proton acceptor. The active-site Proton donor is K154. Residue C195 is the Nucleophile of the active site.

It belongs to the carbon-nitrogen hydrolase superfamily. NIT1/NIT2 family.

This Schizosaccharomyces pombe (strain 972 / ATCC 24843) (Fission yeast) protein is Hydrolase C26A3.11.